The following is a 677-amino-acid chain: Methionine--tRNA ligase (677 aa).

Positions 14–24 (PYANGSIHLGH) match the 'HIGH' region motif. Positions 145, 148, 158, and 161 each coordinate Zn(2+). A 'KMSKS' region motif is present at residues 331-335 (KMSKS). An ATP-binding site is contributed by Lys-334. Residues 575 to 677 (AFAAVDLRIA…SGAKPGQRVK (103 aa)) enclose the tRNA-binding domain.

It belongs to the class-I aminoacyl-tRNA synthetase family. MetG type 1 subfamily. As to quaternary structure, homodimer. Requires Zn(2+) as cofactor.

Its subcellular location is the cytoplasm. The catalysed reaction is tRNA(Met) + L-methionine + ATP = L-methionyl-tRNA(Met) + AMP + diphosphate. Is required not only for elongation of protein synthesis but also for the initiation of all mRNA translation through initiator tRNA(fMet) aminoacylation. The sequence is that of Methionine--tRNA ligase from Pseudomonas aeruginosa (strain LESB58).